Reading from the N-terminus, the 823-residue chain is Ankyrin repeat domain-containing protein 20A1 (823 aa).

5 ANK repeats span residues 66–95, 99–128, 132–161, 165–194, and 198–227; these read QHRT…QIDV, ENRT…NPNL, YGNT…HIEA, DNNT…SSHA, and LRRS…DVFA. Disordered regions lie at residues 301–343 and 355–402; these read VPEK…EVED and VQTL…LSEN. The segment covering 372–384 has biased composition (basic and acidic residues); it reads QERHERSEKKQPQ. Coiled coils occupy residues 431-480, 565-724, and 776-805; these read KKLK…KQLE, EMIT…NNST, and LVLE…EKTE.

The polypeptide is Ankyrin repeat domain-containing protein 20A1 (ANKRD20A1) (Homo sapiens (Human)).